The following is a 151-amino-acid chain: Large ribosomal subunit protein bL28c (151 aa).

The transit peptide at 1 to 74 (MATMVAGISL…PFKPSLQPVA (74 aa)) directs the protein to the chloroplast.

The protein belongs to the bacterial ribosomal protein bL28 family. In terms of assembly, part of the 50S ribosomal subunit.

The protein resides in the plastid. It localises to the chloroplast. In Nicotiana tabacum (Common tobacco), this protein is Large ribosomal subunit protein bL28c (RPL28).